Consider the following 653-residue polypeptide: Alpha-L-iduronidase (653 aa).

The first 27 residues, 1-27 (MRPLRPRAALLALLASLLAAPPVAPAE), serve as a signal peptide directing secretion. Alpha-D-mannopyranose-binding residues include Pro54, Leu56, and His58. Residue His91 coordinates alpha-L-iduronate. Residue Asn110 is glycosylated (N-linked (GlcNAc...) asparagine). Alpha-L-iduronate is bound by residues Asn181 and Glu182. Catalysis depends on Glu182, which acts as the Proton donor. N-linked (GlcNAc...) asparagine glycosylation is present at Asn190. Residues Lys264, Glu299, and Gly305 each coordinate alpha-L-iduronate. The active-site Nucleophile is the Glu299. An alpha-D-mannopyranose-binding site is contributed by Trp306. Residue Asn336 is glycosylated (N-linked (GlcNAc...) asparagine). Positions 349 and 363 each coordinate alpha-L-iduronate. Residues Asn372, Asn415, and Asn451 are each glycosylated (N-linked (GlcNAc...) asparagine). Residues Arg488 and Arg492 each coordinate alpha-D-mannopyranose. Arg492 contributes to the beta-D-mannose binding site. Cys541 and Cys577 form a disulfide bridge.

This sequence belongs to the glycosyl hydrolase 39 family. Monomer. In terms of processing, N-glycosylation at Asn-372 contributes to substrate binding and is required for full enzymatic activity. In terms of tissue distribution, ubiquitous.

It localises to the lysosome. The enzyme catalyses Hydrolysis of unsulfated alpha-L-iduronosidic linkages in dermatan sulfate.. The protein is Alpha-L-iduronidase (IDUA) of Homo sapiens (Human).